Reading from the N-terminus, the 308-residue chain is Porphobilinogen deaminase (308 aa).

Cysteine 243 is subject to S-(dipyrrolylmethanemethyl)cysteine.

It belongs to the HMBS family. Monomer. Dipyrromethane is required as a cofactor.

It catalyses the reaction 4 porphobilinogen + H2O = hydroxymethylbilane + 4 NH4(+). It participates in porphyrin-containing compound metabolism; protoporphyrin-IX biosynthesis; coproporphyrinogen-III from 5-aminolevulinate: step 2/4. Functionally, tetrapolymerization of the monopyrrole PBG into the hydroxymethylbilane pre-uroporphyrinogen in several discrete steps. This Nitrosomonas europaea (strain ATCC 19718 / CIP 103999 / KCTC 2705 / NBRC 14298) protein is Porphobilinogen deaminase.